The chain runs to 243 residues: Pyridoxine 5'-phosphate synthase (243 aa).

Residue asparagine 9 participates in 3-amino-2-oxopropyl phosphate binding. 11–12 (DH) provides a ligand contact to 1-deoxy-D-xylulose 5-phosphate. Arginine 20 contributes to the 3-amino-2-oxopropyl phosphate binding site. The active-site Proton acceptor is the histidine 45. Residues arginine 47 and histidine 52 each coordinate 1-deoxy-D-xylulose 5-phosphate. Glutamate 72 acts as the Proton acceptor in catalysis. Threonine 102 is a binding site for 1-deoxy-D-xylulose 5-phosphate. Histidine 193 acts as the Proton donor in catalysis. Residues glycine 194 and 215–216 (GH) contribute to the 3-amino-2-oxopropyl phosphate site.

Belongs to the PNP synthase family. In terms of assembly, homooctamer; tetramer of dimers.

It is found in the cytoplasm. The enzyme catalyses 3-amino-2-oxopropyl phosphate + 1-deoxy-D-xylulose 5-phosphate = pyridoxine 5'-phosphate + phosphate + 2 H2O + H(+). It functions in the pathway cofactor biosynthesis; pyridoxine 5'-phosphate biosynthesis; pyridoxine 5'-phosphate from D-erythrose 4-phosphate: step 5/5. Its function is as follows. Catalyzes the complicated ring closure reaction between the two acyclic compounds 1-deoxy-D-xylulose-5-phosphate (DXP) and 3-amino-2-oxopropyl phosphate (1-amino-acetone-3-phosphate or AAP) to form pyridoxine 5'-phosphate (PNP) and inorganic phosphate. The polypeptide is Pyridoxine 5'-phosphate synthase (Vibrio cholerae serotype O1 (strain ATCC 39315 / El Tor Inaba N16961)).